Here is a 453-residue protein sequence, read N- to C-terminus: GTPase Der (453 aa).

EngA-type G domains follow at residues 3–167 (FTLA…PAQT) and 187–360 (IKVA…AVWN). GTP is bound by residues 9-16 (GRPNVGKS), 56-60 (DTAGL), 119-122 (NKSE), 193-200 (GRPNAGKS), 240-244 (DTAGL), and 305-308 (NKSD). The KH-like domain occupies 361–445 (TRIPTNPLNR…PIRLTLREKG (85 aa)).

It belongs to the TRAFAC class TrmE-Era-EngA-EngB-Septin-like GTPase superfamily. EngA (Der) GTPase family. As to quaternary structure, associates with the 50S ribosomal subunit.

Functionally, GTPase that plays an essential role in the late steps of ribosome biogenesis. In Azorhizobium caulinodans (strain ATCC 43989 / DSM 5975 / JCM 20966 / LMG 6465 / NBRC 14845 / NCIMB 13405 / ORS 571), this protein is GTPase Der.